A 138-amino-acid polypeptide reads, in one-letter code: Cellular retinoic acid-binding protein 2 (138 aa).

The Nuclear localization signal motif lies at 21–31; the sequence is KVLGVNVMLRK. Lysine 102 participates in a covalent cross-link: Glycyl lysine isopeptide (Lys-Gly) (interchain with G-Cter in SUMO). 133–135 contacts all-trans-retinoate; that stretch reads RVY.

This sequence belongs to the calycin superfamily. Fatty-acid binding protein (FABP) family. As to quaternary structure, interacts with RXR and RARA. Interacts with importin alpha. Sumoylated in response to retinoic acid binding, sumoylation is critical for dissociation from ER and subsequent nuclear translocation.

The protein localises to the cytoplasm. It localises to the endoplasmic reticulum. Its subcellular location is the nucleus. Functionally, transports retinoic acid to the nucleus. Regulates the access of retinoic acid to the nuclear retinoic acid receptors. The protein is Cellular retinoic acid-binding protein 2 (CRABP2) of Homo sapiens (Human).